The following is a 643-amino-acid chain: Protein disulfide-isomerase A4 (643 aa).

The first 20 residues, 1–20 (MRPRKAWMLVLLLALVQLLA), serve as a signal peptide directing secretion. 2 Thioredoxin domains span residues 21–168 (VASA…EVSQ) and 170–300 (NWTP…EFLK). Residues 24–54 (AGAPDEDSTDKEDAIEEDEEEDEDDDDDDDD) form a disordered region. The span at 27-54 (PDEDSTDKEDAIEEDEEEDEDDDDDDDD) shows a compositional bias: acidic residues. Residues 90-93 (CGHC) carry the CXXC motif. Intrachain disulfides connect Cys-90/Cys-93 and Cys-205/Cys-208. Lys-365 carries the N6-acetyllysine modification. Residues 503–634 (FKKGKLKPVI…LSKFIEEHAT (132 aa)) enclose the Thioredoxin 3 domain. A CXXC motif is present at residues 553–556 (CGHC). Residues Cys-553 and Cys-556 are joined by a disulfide bond. The Prevents secretion from ER signature appears at 640-643 (KEEL).

It belongs to the protein disulfide isomerase family. Part of a large chaperone multiprotein complex comprising DNAJB11, HSP90B1, HSPA5, HYOU, PDIA2, PDIA4, PDIA6, PPIB, SDF2L1, UGGT1 and very small amounts of ERP29, but not, or at very low levels, CALR nor CANX. Component of a complex containing at least CRELD2, MANF, MATN3 and PDIA4.

It is found in the endoplasmic reticulum lumen. It localises to the melanosome. It carries out the reaction Catalyzes the rearrangement of -S-S- bonds in proteins.. The protein is Protein disulfide-isomerase A4 (PDIA4) of Bos taurus (Bovine).